Consider the following 158-residue polypeptide: Ribonuclease H (158 aa).

The region spanning 9–155 is the RNase H type-1 domain; that stretch reads AFKPVELYTD…CDKLAVAAYQ (147 aa). Residues aspartate 18, glutamate 58, aspartate 80, and aspartate 147 each contribute to the Mg(2+) site.

It belongs to the RNase H family. In terms of assembly, monomer. Mg(2+) is required as a cofactor.

It localises to the cytoplasm. The catalysed reaction is Endonucleolytic cleavage to 5'-phosphomonoester.. Endonuclease that specifically degrades the RNA of RNA-DNA hybrids. This Rhodopirellula baltica (strain DSM 10527 / NCIMB 13988 / SH1) protein is Ribonuclease H.